The sequence spans 263 residues: Proteasome subunit alpha type-1 (263 aa).

N-acetylmethionine is present on methionine 1. Serine 110 is subject to Phosphoserine; alternate. O-linked (GlcNAc) serine; alternate glycosylation is present at serine 110. Lysine 115 is covalently cross-linked (Glycyl lysine isopeptide (Lys-Gly) (interchain with G-Cter in ubiquitin)). Serine 177 carries the phosphoserine modification. Residue lysine 208 forms a Glycyl lysine isopeptide (Lys-Gly) (interchain with G-Cter in ubiquitin) linkage. A disordered region spans residues 232-263; the sequence is FLEGLEERPQRKAQPAQPADEPAEKADEPMEH. Residues 253–263 are compositionally biased toward basic and acidic residues; sequence PAEKADEPMEH.

Belongs to the peptidase T1A family. As to quaternary structure, the 26S proteasome consists of a 20S proteasome core and two 19S regulatory subunits. The 20S proteasome core is a barrel-shaped complex made of 28 subunits that are arranged in four stacked rings. The two outer rings are each formed by seven alpha subunits, and the two inner rings are formed by seven beta subunits. The proteolytic activity is exerted by three beta-subunits PSMB5, PSMB6 and PSMB7. Interacts with NOTCH3. Interacts with ZFAND1.

The protein localises to the cytoplasm. It localises to the nucleus. Functionally, component of the 20S core proteasome complex involved in the proteolytic degradation of most intracellular proteins. This complex plays numerous essential roles within the cell by associating with different regulatory particles. Associated with two 19S regulatory particles, forms the 26S proteasome and thus participates in the ATP-dependent degradation of ubiquitinated proteins. The 26S proteasome plays a key role in the maintenance of protein homeostasis by removing misfolded or damaged proteins that could impair cellular functions, and by removing proteins whose functions are no longer required. Associated with the PA200 or PA28, the 20S proteasome mediates ubiquitin-independent protein degradation. This type of proteolysis is required in several pathways including spermatogenesis (20S-PA200 complex) or generation of a subset of MHC class I-presented antigenic peptides (20S-PA28 complex). The sequence is that of Proteasome subunit alpha type-1 from Homo sapiens (Human).